The sequence spans 315 residues: tRNA pseudouridine synthase B (315 aa).

The Nucleophile role is filled by Asp54.

This sequence belongs to the pseudouridine synthase TruB family. Type 1 subfamily.

It catalyses the reaction uridine(55) in tRNA = pseudouridine(55) in tRNA. Its function is as follows. Responsible for synthesis of pseudouridine from uracil-55 in the psi GC loop of transfer RNAs. This is tRNA pseudouridine synthase B from Agrobacterium fabrum (strain C58 / ATCC 33970) (Agrobacterium tumefaciens (strain C58)).